The following is an 889-amino-acid chain: Low-affinity potassium transport protein (889 aa).

The Cytoplasmic portion of the chain corresponds to 1 to 51; the sequence is MPTAKRTSSRASLALPFQLRLVHKKSWGHRLRDFISGFLKSCRPIAKYVFP. A helical transmembrane segment spans residues 52–73; the sequence is NFIVVHYIYLITLSIIGSILLY. Over 74–80 the chain is Extracellular; it reads PCKNTAF. The chain crosses the membrane as a helical span at residues 81–101; that stretch reads IDVLFLAAGASTQGGLATKST. Topologically, residues 102–109 are cytoplasmic; that stretch reads NDFNLYQQ. Residues 110 to 130 form a helical membrane-spanning segment; it reads IVVYVITLLSTPILIHGFLAF. The Extracellular portion of the chain corresponds to 131–464; that stretch reads VRLYWFERYF…EYRALRLLCC (334 aa). The tract at residues 189-244 is disordered; sequence REDPRQSASDVPMDSPDTSALSSISPLNVSSSKEESSDTQSSPPNFSSKRQPSDVD. Residues 207-219 show a composition bias toward low complexity; the sequence is SALSSISPLNVSS. Residues N216, N233, and N265 are each glycosylated (N-linked (GlcNAc...) asparagine). The chain crosses the membrane as a helical span at residues 465-487; that stretch reads ILMVYYIGFNILAFVTIVPWACT. Topologically, residues 488-499 are cytoplasmic; sequence RHHYSEIIRRNG. The helical transmembrane segment at 500-521 threads the bilayer; that stretch reads VSPTWWGFFTAMSAFSNLGLSL. Topologically, residues 522 to 524 are extracellular; sequence TAD. The chain crosses the membrane as a helical span at residues 525–545; sequence SMVSFDTAPYPLIFMMFFIII. The Cytoplasmic portion of the chain corresponds to 546 to 548; that stretch reads GNT. The chain crosses the membrane as a helical span at residues 549–569; it reads GFPIMLRFIIWIMFKTSRDLS. At 570–584 the chain is on the extracellular side; that stretch reads QFKESLGFLLDHPRR. The helical transmembrane segment at 585-605 threads the bilayer; it reads CFTLLFPSGPTWWLFTTLVVL. Over 606–609 the chain is Cytoplasmic; sequence NATD. A helical membrane pass occupies residues 610–630; it reads WILFIILDFNSAVVRQVAKGY. Over 631–657 the chain is Extracellular; it reads RALMGLFQSVCTRTAGFNVVDLSKLHP. A helical transmembrane segment spans residues 658–678; that stretch reads SIQVSYMLMMYVSVLPLAISI. Topologically, residues 679–743 are cytoplasmic; that stretch reads RRTNVYEEQS…KSFVGAHLRR (65 aa). Positions 705–733 are disordered; that stretch reads DDIKETDHDGESEERDTVSTKSKPKKQSP. The helical transmembrane segment at 744 to 764 threads the bilayer; that stretch reads QLSFDLWYLFLGLFIICICEG. Over 765–776 the chain is Extracellular; sequence RKIEDVNKPDFN. The helical transmembrane segment at 777-797 threads the bilayer; the sequence is VFAILFEVVSAYGTVGLSLGY. The Cytoplasmic portion of the chain corresponds to 798–889; that stretch reads PNTNTSLSAQ…KIATKFWGKH (92 aa).

It belongs to the TrkH potassium transport family.

It is found in the membrane. In terms of biological role, this protein is required for low-affinity potassium transport. In Saccharomyces cerevisiae (strain ATCC 204508 / S288c) (Baker's yeast), this protein is Low-affinity potassium transport protein (TRK2).